The chain runs to 220 residues: 2-hydroxy-3-keto-5-methylthiopentenyl-1-phosphate phosphatase (220 aa).

The protein belongs to the HAD-like hydrolase superfamily. MtnX family.

It catalyses the reaction 2-hydroxy-5-methylsulfanyl-3-oxopent-1-enyl phosphate + H2O = 1,2-dihydroxy-5-(methylsulfanyl)pent-1-en-3-one + phosphate. It functions in the pathway amino-acid biosynthesis; L-methionine biosynthesis via salvage pathway; L-methionine from S-methyl-5-thio-alpha-D-ribose 1-phosphate: step 4/6. In terms of biological role, dephosphorylates 2-hydroxy-3-keto-5-methylthiopentenyl-1-phosphate (HK-MTPenyl-1-P) yielding 1,2-dihydroxy-3-keto-5-methylthiopentene (DHK-MTPene). The polypeptide is 2-hydroxy-3-keto-5-methylthiopentenyl-1-phosphate phosphatase (Geobacillus thermodenitrificans (strain NG80-2)).